The chain runs to 214 residues: Cell division protein SepF (214 aa).

The segment at 24 to 120 (DNYEEYEERK…NTRRAQESTA (97 aa)) is disordered. The span at 30–40 (EERKAVNEPPR) shows a compositional bias: basic and acidic residues. The segment covering 55 to 67 (ESYSQPAYTQQSE) has biased composition (polar residues). Over residues 69-98 (VVEKPSARYRSAEAHQERDTQQAAYTEKKV) the composition is skewed to basic and acidic residues. The segment covering 101-120 (MRSSNQSATTNTRRAQESTA) has biased composition (polar residues).

It belongs to the SepF family. In terms of assembly, homodimer. Interacts with FtsZ.

It is found in the cytoplasm. Cell division protein that is part of the divisome complex and is recruited early to the Z-ring. Probably stimulates Z-ring formation, perhaps through the cross-linking of FtsZ protofilaments. Its function overlaps with FtsA. In Enterococcus faecalis (strain ATCC 700802 / V583), this protein is Cell division protein SepF.